We begin with the raw amino-acid sequence, 147 residues long: Peptide methionine sulfoxide reductase MsrB (147 aa).

The MsrB domain maps to 8–131 (KEELKKVLTE…NSASLKFIPK (124 aa)). The active-site Nucleophile is the cysteine 120.

It belongs to the MsrB Met sulfoxide reductase family.

The catalysed reaction is L-methionyl-[protein] + [thioredoxin]-disulfide + H2O = L-methionyl-(R)-S-oxide-[protein] + [thioredoxin]-dithiol. In Clostridium perfringens (strain ATCC 13124 / DSM 756 / JCM 1290 / NCIMB 6125 / NCTC 8237 / Type A), this protein is Peptide methionine sulfoxide reductase MsrB.